The following is a 1254-amino-acid chain: DNA polymerase gamma (1254 aa).

The segment covering 1125-1137 (RKKENRIDDENKK) has biased composition (basic and acidic residues). Disordered regions lie at residues 1125 to 1145 (RKKENRIDDENKKKLTRKKNT) and 1202 to 1240 (YKKKPSQARTASSSPIRKTAKAVHSKKLPARKSSTTNRN). The segment covering 1208–1217 (QARTASSSPI) has biased composition (polar residues). The segment covering 1219–1231 (KTAKAVHSKKLPA) has biased composition (basic residues).

Belongs to the DNA polymerase type-A family. Mg(2+) is required as a cofactor.

It is found in the mitochondrion. It carries out the reaction DNA(n) + a 2'-deoxyribonucleoside 5'-triphosphate = DNA(n+1) + diphosphate. Involved in the replication of mitochondrial DNA. The chain is DNA polymerase gamma (MIP1) from Saccharomyces cerevisiae (strain ATCC 204508 / S288c) (Baker's yeast).